The chain runs to 342 residues: Outer membrane porin C (342 aa).

It belongs to the Gram-negative porin family. Homotrimer.

Its subcellular location is the cell outer membrane. Its function is as follows. Forms pores that allow passive diffusion of small molecules across the outer membrane. In R.aquatilis OmpC is involved in the adhesion to wheat roots. This Rahnella aquatilis protein is Outer membrane porin C (ompC).